Consider the following 344-residue polypeptide: L-rhamnose-proton symporter (344 aa).

10 helical membrane-spanning segments follow: residues A4–A24, W38–L58, F68–I88, M101–I121, T137–L157, L175–A195, L214–I234, V259–G279, I290–L310, and V323–A343.

This sequence belongs to the L-rhamnose transporter (TC 2.A.7.6) family.

It is found in the cell inner membrane. It catalyses the reaction L-rhamnopyranose(in) + H(+)(in) = L-rhamnopyranose(out) + H(+)(out). Uptake of L-rhamnose across the cytoplasmic membrane with the concomitant transport of protons into the cell (symport system). In Escherichia coli O127:H6 (strain E2348/69 / EPEC), this protein is L-rhamnose-proton symporter.